Consider the following 358-residue polypeptide: Photosystem II protein D1 3 (358 aa).

3 helical membrane-spanning segments follow: residues 28–45, 117–132, and 141–155; these read YIGWFGVLMIPCLLAATT, HFLIGISAYMGRQWEL, and WICVAYSAPLSAAMA. H117 provides a ligand contact to chlorophyll a. A pheophytin a-binding site is contributed by Y125. [CaMn4O5] cluster contacts are provided by D169 and E188. The chain crosses the membrane as a helical span at residues 196 to 217; that stretch reads FHMLGVAGVFGGSLFSAMHGSL. H197 contacts chlorophyll a. A quinone is bound by residues H214 and 263–264; that span reads SF. H214 lines the Fe cation pocket. H271 is a Fe cation binding site. The chain crosses the membrane as a helical span at residues 273–287; the sequence is LLGAWPVVGIWFTSM. 4 residues coordinate [CaMn4O5] cluster: H331, E332, D341, and A343. Residues 344–358 constitute a propeptide that is removed on maturation; it reads TVESTPVALQAPAIG.

Belongs to the reaction center PufL/M/PsbA/D family. As to quaternary structure, PSII is composed of 1 copy each of membrane proteins PsbA, PsbB, PsbC, PsbD, PsbE, PsbF, PsbH, PsbI, PsbJ, PsbK, PsbL, PsbM, PsbT, PsbX, PsbY, PsbZ, Psb30/Ycf12, peripheral proteins PsbO, CyanoQ (PsbQ), PsbU, PsbV and a large number of cofactors. It forms dimeric complexes. The D1/D2 heterodimer binds P680, chlorophylls that are the primary electron donor of PSII, and subsequent electron acceptors. It shares a non-heme iron and each subunit binds pheophytin, quinone, additional chlorophylls, carotenoids and lipids. D1 provides most of the ligands for the Mn4-Ca-O5 cluster of the oxygen-evolving complex (OEC). There is also a Cl(-1) ion associated with D1 and D2, which is required for oxygen evolution. The PSII complex binds additional chlorophylls, carotenoids and specific lipids. serves as cofactor. In terms of processing, tyr-160 forms a radical intermediate that is referred to as redox-active TyrZ, YZ or Y-Z. Post-translationally, C-terminally processed by CtpA; processing is essential to allow assembly of the oxygen-evolving complex and thus photosynthetic growth.

It localises to the cellular thylakoid membrane. It catalyses the reaction 2 a plastoquinone + 4 hnu + 2 H2O = 2 a plastoquinol + O2. Functionally, photosystem II (PSII) is a light-driven water:plastoquinone oxidoreductase that uses light energy to abstract electrons from H(2)O, generating O(2) and a proton gradient subsequently used for ATP formation. It consists of a core antenna complex that captures photons, and an electron transfer chain that converts photonic excitation into a charge separation. The D1/D2 (PsbA/PsbD) reaction center heterodimer binds P680, the primary electron donor of PSII as well as several subsequent electron acceptors. The sequence is that of Photosystem II protein D1 3 from Synechococcus sp. (strain CC9311).